The chain runs to 431 residues: Na(+)-translocating NADH-quinone reductase subunit F (431 aa).

Residues 10 to 30 form a helical membrane-spanning segment; it reads ISIASLVFCVIGLILSGVILI. The 2Fe-2S ferredoxin-type domain maps to 41–133; sequence CKLKINNDDS…DMNLEIEERY (93 aa). Residues Cys-76, Cys-82, Cys-85, and Cys-117 each contribute to the [2Fe-2S] cluster site. The 151-residue stretch at 136–286 folds into the FAD-binding FR-type domain; it reads ASSWEGTVVS…SGPYGESFMK (151 aa).

Belongs to the NqrF family. As to quaternary structure, composed of six subunits; NqrA, NqrB, NqrC, NqrD, NqrE and NqrF. [2Fe-2S] cluster is required as a cofactor. Requires FAD as cofactor.

The protein localises to the cell inner membrane. The enzyme catalyses a ubiquinone + n Na(+)(in) + NADH + H(+) = a ubiquinol + n Na(+)(out) + NAD(+). NQR complex catalyzes the reduction of ubiquinone-1 to ubiquinol by two successive reactions, coupled with the transport of Na(+) ions from the cytoplasm to the periplasm. The first step is catalyzed by NqrF, which accepts electrons from NADH and reduces ubiquinone-1 to ubisemiquinone by a one-electron transfer pathway. This is Na(+)-translocating NADH-quinone reductase subunit F from Chlamydia felis (strain Fe/C-56) (Chlamydophila felis).